The sequence spans 323 residues: tRNA dimethylallyltransferase (323 aa).

12-19 (GPTAAGKT) is a binding site for ATP. Position 14 to 19 (14 to 19 (TAAGKT)) interacts with substrate. 2 interaction with substrate tRNA regions span residues 37 to 40 (DSAL) and 161 to 165 (QRLSR).

This sequence belongs to the IPP transferase family. In terms of assembly, monomer. Mg(2+) is required as a cofactor.

The catalysed reaction is adenosine(37) in tRNA + dimethylallyl diphosphate = N(6)-dimethylallyladenosine(37) in tRNA + diphosphate. Its function is as follows. Catalyzes the transfer of a dimethylallyl group onto the adenine at position 37 in tRNAs that read codons beginning with uridine, leading to the formation of N6-(dimethylallyl)adenosine (i(6)A). The sequence is that of tRNA dimethylallyltransferase from Pseudomonas fluorescens (strain SBW25).